We begin with the raw amino-acid sequence, 230 residues long: Ribose-5-phosphate isomerase A (230 aa).

Residues 32–35 (TGST), 85–88 (DGAD), and 98–101 (KGGG) each bind substrate. The active-site Proton acceptor is glutamate 107. Lysine 125 contributes to the substrate binding site.

The protein belongs to the ribose 5-phosphate isomerase family. In terms of assembly, homodimer.

It catalyses the reaction aldehydo-D-ribose 5-phosphate = D-ribulose 5-phosphate. It participates in carbohydrate degradation; pentose phosphate pathway; D-ribose 5-phosphate from D-ribulose 5-phosphate (non-oxidative stage): step 1/1. Functionally, catalyzes the reversible conversion of ribose-5-phosphate to ribulose 5-phosphate. This chain is Ribose-5-phosphate isomerase A, found in Burkholderia ambifaria (strain ATCC BAA-244 / DSM 16087 / CCUG 44356 / LMG 19182 / AMMD) (Burkholderia cepacia (strain AMMD)).